A 379-amino-acid chain; its full sequence is Cobalt-precorrin-5B C(1)-methyltransferase (379 aa).

It belongs to the CbiD family.

It carries out the reaction Co-precorrin-5B + S-adenosyl-L-methionine = Co-precorrin-6A + S-adenosyl-L-homocysteine. Its pathway is cofactor biosynthesis; adenosylcobalamin biosynthesis; cob(II)yrinate a,c-diamide from sirohydrochlorin (anaerobic route): step 6/10. Its function is as follows. Catalyzes the methylation of C-1 in cobalt-precorrin-5B to form cobalt-precorrin-6A. In Salmonella paratyphi B (strain ATCC BAA-1250 / SPB7), this protein is Cobalt-precorrin-5B C(1)-methyltransferase.